The primary structure comprises 296 residues: MLIGSHVSMSGKKMLQGSAEEAHKYGESTFMIYTGAPQNTRRKNIEDLNIEKGQQAMKTYGLSNIVVHAPYIINIANTTKPEVFNLGVDFLQKEIERTQALGAKDIVLHPGAHVGAGVDKGIQKIIEGLNEVLTHDNDVRIALETMAGKGTEVGRSFEEIAQIIDGVTHNDRLSVCFDTCHTHDAGYNVKEDFDGVLEKFDSIIGVDRIKVVHVNDSKNLRGAQKDRHENIGFGHIGFDALNYVVHHDTFKNIPKILETPYVGEDKKNKKPPYKLEIDMLKSQKFDPELKNKILTQ.

His-68, His-109, Glu-144, Asp-178, His-181, His-213, Asp-226, His-228, and Glu-258 together coordinate Zn(2+).

It belongs to the AP endonuclease 2 family. The cofactor is Zn(2+).

It catalyses the reaction Endonucleolytic cleavage to 5'-phosphooligonucleotide end-products.. Endonuclease IV plays a role in DNA repair. It cleaves phosphodiester bonds at apurinic or apyrimidinic (AP) sites, generating a 3'-hydroxyl group and a 5'-terminal sugar phosphate. In Staphylococcus epidermidis (strain ATCC 35984 / DSM 28319 / BCRC 17069 / CCUG 31568 / BM 3577 / RP62A), this protein is Probable endonuclease 4.